We begin with the raw amino-acid sequence, 452 residues long: MSVVVQHVEEKAVHSWSRISTAGKKALEEALLVFNPMSQDLSATEAQLVAFLQGLRDDGFQPTILRSGDVYGYSSCTANPPSQTKLQARAPTPAATSPPASAPQTAVRLPAGRATLLPMPLSGRLAKASTPGLAKHATTNLLLSSLKQSSAGRAQGAAVGFPTHLYPGVYPAMRLSVVLEALVPIKTPVACLGAKPKAQSLQLSLGDSPLKVRKGPGKRLGNAQLKAPRKATSKGSKCLAQRGPRSGPRQGAGLQSKTCKVTGSLGGPRVKDGGALGTKAAQAKAACAQAKVAQTQATATQARAKAKAVRARAKAKAARIKAREVRARAKAKAVQAKAKVARTQPRGRGRPKGSIQGRTARRSRKSRPETVGQKRKRTEEAKDLSPRKRTRLGPRSPKVQLGPGTARLLKFRAIKVDRLASDDEVRQQAQRILRVNLSPVIRLQPLPPHSAP.

The disordered stretch occupies residues 81–106 (PSQTKLQARAPTPAATSPPASAPQTA). Positions 87-106 (QARAPTPAATSPPASAPQTA) are enriched in low complexity. A Phosphoserine modification is found at Ser129. Disordered regions lie at residues 209-256 (PLKV…GLQS) and 322-404 (AREV…LGPG). Residues 279-344 (KAAQAKAACA…QAKAKVARTQ (66 aa)) are a coiled coil. Positions 332 to 344 (KAVQAKAKVARTQ) are enriched in low complexity. Positions 377–386 (RTEEAKDLSP) are enriched in basic and acidic residues.

The chain is Coiled-coil domain-containing protein 71 (CCDC71) from Bos taurus (Bovine).